We begin with the raw amino-acid sequence, 89 residues long: Elongation factor 1-beta (89 aa).

The protein belongs to the EF-1-beta/EF-1-delta family.

In terms of biological role, promotes the exchange of GDP for GTP in EF-1-alpha/GDP, thus allowing the regeneration of EF-1-alpha/GTP that could then be used to form the ternary complex EF-1-alpha/GTP/AAtRNA. This Methanococcus maripaludis (strain C6 / ATCC BAA-1332) protein is Elongation factor 1-beta.